The chain runs to 301 residues: Bifunctional protein FolD (301 aa).

NADP(+)-binding positions include 166–168, S191, and I232; that span reads GKS.

This sequence belongs to the tetrahydrofolate dehydrogenase/cyclohydrolase family. In terms of assembly, homodimer.

The enzyme catalyses (6R)-5,10-methylene-5,6,7,8-tetrahydrofolate + NADP(+) = (6R)-5,10-methenyltetrahydrofolate + NADPH. The catalysed reaction is (6R)-5,10-methenyltetrahydrofolate + H2O = (6R)-10-formyltetrahydrofolate + H(+). It participates in one-carbon metabolism; tetrahydrofolate interconversion. In terms of biological role, catalyzes the oxidation of 5,10-methylenetetrahydrofolate to 5,10-methenyltetrahydrofolate and then the hydrolysis of 5,10-methenyltetrahydrofolate to 10-formyltetrahydrofolate. The polypeptide is Bifunctional protein FolD (Orientia tsutsugamushi (strain Ikeda) (Rickettsia tsutsugamushi)).